A 164-amino-acid chain; its full sequence is Phosphopantetheine adenylyltransferase (164 aa).

Ser-9 provides a ligand contact to substrate. ATP contacts are provided by residues 9 to 10 and His-17; that span reads SF. Substrate-binding residues include Lys-41, Leu-73, and Lys-87. ATP is bound by residues 88-90, Glu-98, and 122-128; these read GLR and YSYLSSS.

It belongs to the bacterial CoaD family. In terms of assembly, homohexamer. It depends on Mg(2+) as a cofactor.

It localises to the cytoplasm. It catalyses the reaction (R)-4'-phosphopantetheine + ATP + H(+) = 3'-dephospho-CoA + diphosphate. Its pathway is cofactor biosynthesis; coenzyme A biosynthesis; CoA from (R)-pantothenate: step 4/5. In terms of biological role, reversibly transfers an adenylyl group from ATP to 4'-phosphopantetheine, yielding dephospho-CoA (dPCoA) and pyrophosphate. The polypeptide is Phosphopantetheine adenylyltransferase (Rhodococcus jostii (strain RHA1)).